The sequence spans 653 residues: Mannosyl-oligosaccharide 1,2-alpha-mannosidase IA (653 aa).

Residues M1 to K41 lie on the Cytoplasmic side of the membrane. The chain crosses the membrane as a helical; Signal-anchor for type II membrane protein span at residues F42–L62. Over P63–E653 the chain is Lumenal. Residues Q81–A116 form a disordered region. Over residues A84–G108 the composition is skewed to basic and acidic residues. A disulfide bridge links C476 with C508. An N-linked (GlcNAc...) asparagine glycan is attached at N513. Residue E522 is the Proton donor of the active site.

It belongs to the glycosyl hydrolase 47 family. Ca(2+) is required as a cofactor.

Its subcellular location is the golgi apparatus membrane. It carries out the reaction N(4)-(alpha-D-Man-(1-&gt;2)-alpha-D-Man-(1-&gt;2)-alpha-D-Man-(1-&gt;3)-[alpha-D-Man-(1-&gt;2)-alpha-D-Man-(1-&gt;3)-[alpha-D-Man-(1-&gt;2)-alpha-D-Man-(1-&gt;6)]-alpha-D-Man-(1-&gt;6)]-beta-D-Man-(1-&gt;4)-beta-D-GlcNAc-(1-&gt;4)-beta-D-GlcNAc)-L-asparaginyl-[protein] (N-glucan mannose isomer 9A1,2,3B1,2,3) + 4 H2O = N(4)-(alpha-D-Man-(1-&gt;3)-[alpha-D-Man-(1-&gt;3)-[alpha-D-Man-(1-&gt;6)]-alpha-D-Man-(1-&gt;6)]-beta-D-Man-(1-&gt;4)-beta-D-GlcNAc-(1-&gt;4)-beta-D-GlcNAc)-L-asparaginyl-[protein] (N-glucan mannose isomer 5A1,2) + 4 beta-D-mannose. The catalysed reaction is N(4)-(alpha-D-Man-(1-&gt;2)-alpha-D-Man-(1-&gt;2)-alpha-D-Man-(1-&gt;3)-[alpha-D-Man-(1-&gt;3)-[alpha-D-Man-(1-&gt;2)-alpha-D-Man-(1-&gt;6)]-alpha-D-Man-(1-&gt;6)]-beta-D-Man-(1-&gt;4)-beta-D-GlcNAc-(1-&gt;4)-beta-D-GlcNAc)-L-asparaginyl-[protein] (N-glucan mannose isomer 8A1,2,3B1,3) + 3 H2O = N(4)-(alpha-D-Man-(1-&gt;3)-[alpha-D-Man-(1-&gt;3)-[alpha-D-Man-(1-&gt;6)]-alpha-D-Man-(1-&gt;6)]-beta-D-Man-(1-&gt;4)-beta-D-GlcNAc-(1-&gt;4)-beta-D-GlcNAc)-L-asparaginyl-[protein] (N-glucan mannose isomer 5A1,2) + 3 beta-D-mannose. It participates in protein modification; protein glycosylation. Its activity is regulated as follows. Inhibited by both 1-deoxymannojirimycin and kifunensine. In terms of biological role, involved in the maturation of Asn-linked oligosaccharides. Progressively trim alpha-1,2-linked mannose residues from Man(9)GlcNAc(2) to produce Man(5)GlcNAc(2). The sequence is that of Mannosyl-oligosaccharide 1,2-alpha-mannosidase IA (MAN1A1) from Homo sapiens (Human).